Consider the following 126-residue polypeptide: Holo-[acyl-carrier-protein] synthase (126 aa).

Asp-9 and Glu-58 together coordinate Mg(2+).

This sequence belongs to the P-Pant transferase superfamily. AcpS family. It depends on Mg(2+) as a cofactor.

The protein resides in the cytoplasm. The catalysed reaction is apo-[ACP] + CoA = holo-[ACP] + adenosine 3',5'-bisphosphate + H(+). Transfers the 4'-phosphopantetheine moiety from coenzyme A to a Ser of acyl-carrier-protein. This Buchnera aphidicola subsp. Cinara cedri (strain Cc) protein is Holo-[acyl-carrier-protein] synthase.